We begin with the raw amino-acid sequence, 274 residues long: Undecaprenyl-diphosphatase 1 (274 aa).

A run of 7 helical transmembrane segments spans residues 47–67, 85–105, 113–133, 150–170, 196–216, 225–245, and 253–273; these read QVFLVVIQLGAILSVVLLYFN, VSMWIKIIISCIPATIVGIPF, FYNYQTVSITLISFGILFIMI, ITYTTAVLIGIFQLIAAVFPG, FFLAIPVMFGASLLKLFKFGL, ILFIGMLSAFIVSILAIKFLM, and FKAFGWYRIILGCAVLVYFLI.

The protein belongs to the UppP family.

Its subcellular location is the cell membrane. The enzyme catalyses di-trans,octa-cis-undecaprenyl diphosphate + H2O = di-trans,octa-cis-undecaprenyl phosphate + phosphate + H(+). Functionally, catalyzes the dephosphorylation of undecaprenyl diphosphate (UPP). Confers resistance to bacitracin. The polypeptide is Undecaprenyl-diphosphatase 1 (Clostridium acetobutylicum (strain ATCC 824 / DSM 792 / JCM 1419 / IAM 19013 / LMG 5710 / NBRC 13948 / NRRL B-527 / VKM B-1787 / 2291 / W)).